The chain runs to 73 residues: NAD(P)H-quinone oxidoreductase subunit L (73 aa).

2 consecutive transmembrane segments (helical) span residues 6–26 (SLIGLTYAGLAVLYLLVLPLL) and 44–64 (VLMFFLVLFFFPGMVLLAPFM).

The protein belongs to the complex I NdhL subunit family. As to quaternary structure, NDH-1 can be composed of about 15 different subunits; different subcomplexes with different compositions have been identified which probably have different functions.

Its subcellular location is the cellular thylakoid membrane. The enzyme catalyses a plastoquinone + NADH + (n+1) H(+)(in) = a plastoquinol + NAD(+) + n H(+)(out). It catalyses the reaction a plastoquinone + NADPH + (n+1) H(+)(in) = a plastoquinol + NADP(+) + n H(+)(out). In terms of biological role, NDH-1 shuttles electrons from an unknown electron donor, via FMN and iron-sulfur (Fe-S) centers, to quinones in the respiratory and/or the photosynthetic chain. The immediate electron acceptor for the enzyme in this species is believed to be plastoquinone. Couples the redox reaction to proton translocation, and thus conserves the redox energy in a proton gradient. Cyanobacterial NDH-1 also plays a role in inorganic carbon-concentration. The polypeptide is NAD(P)H-quinone oxidoreductase subunit L (Synechococcus sp. (strain JA-2-3B'a(2-13)) (Cyanobacteria bacterium Yellowstone B-Prime)).